Here is a 74-residue protein sequence, read N- to C-terminus: Large ribosomal subunit protein bL31 (74 aa).

Residues C16, C18, C38, and C41 each coordinate Zn(2+).

Belongs to the bacterial ribosomal protein bL31 family. Type A subfamily. In terms of assembly, part of the 50S ribosomal subunit. Zn(2+) serves as cofactor.

Functionally, binds the 23S rRNA. This Acinetobacter baylyi (strain ATCC 33305 / BD413 / ADP1) protein is Large ribosomal subunit protein bL31.